The following is a 90-amino-acid chain: Small ribosomal subunit protein bS20 (90 aa).

Residues 1-10 are compositionally biased toward polar residues; it reads MANHKSTQKS. Residues 1–25 form a disordered region; sequence MANHKSTQKSIRQDQKRNLINKSRK.

The protein belongs to the bacterial ribosomal protein bS20 family.

Binds directly to 16S ribosomal RNA. This chain is Small ribosomal subunit protein bS20, found in Orientia tsutsugamushi (strain Ikeda) (Rickettsia tsutsugamushi).